We begin with the raw amino-acid sequence, 1163 residues long: DNA-directed RNA polymerase subunit beta 2 (1163 aa).

It belongs to the RNA polymerase beta chain family. In terms of assembly, the RNAP catalytic core consists of 2 alpha, 1 beta, 1 beta' and 1 omega subunit. When a sigma factor is associated with the core the holoenzyme is formed, which can initiate transcription.

It carries out the reaction RNA(n) + a ribonucleoside 5'-triphosphate = RNA(n+1) + diphosphate. In terms of biological role, DNA-dependent RNA polymerase catalyzes the transcription of DNA into RNA using the four ribonucleoside triphosphates as substrates. This Nocardia farcinica (strain IFM 10152) protein is DNA-directed RNA polymerase subunit beta 2.